A 472-amino-acid chain; its full sequence is Methanethiol oxidase (472 aa).

It belongs to the selenium-binding protein family.

The protein resides in the nucleus. It localises to the cytoplasm. The protein localises to the cytosol. It is found in the membrane. It catalyses the reaction methanethiol + O2 + H2O = hydrogen sulfide + formaldehyde + H2O2 + H(+). It functions in the pathway organosulfur degradation. In terms of biological role, catalyzes the oxidation of methanethiol, an organosulfur compound known to be produced in substantial amounts by gut bacteria. Selenium-binding protein which may be involved in the sensing of reactive xenobiotics in the cytoplasm. May be involved in intra-Golgi protein transport. This is Methanethiol oxidase (selenbp1-b) from Xenopus laevis (African clawed frog).